A 310-amino-acid chain; its full sequence is Malate dehydrogenase (310 aa).

NAD(+)-binding positions include 7–13 and D34; that span reads GAAGGIG. Substrate is bound by residues R81 and R87. Residues N94 and 117–119 contribute to the NAD(+) site; that span reads ITN. N119 and R153 together coordinate substrate. The active-site Proton acceptor is the H177. M227 contacts NAD(+).

The protein belongs to the LDH/MDH superfamily. MDH type 1 family. As to quaternary structure, homodimer.

It carries out the reaction (S)-malate + NAD(+) = oxaloacetate + NADH + H(+). Its function is as follows. Catalyzes the reversible oxidation of malate to oxaloacetate. The sequence is that of Malate dehydrogenase from Pseudoalteromonas translucida (strain TAC 125).